Consider the following 220-residue polypeptide: Protein CREG1 (220 aa).

Residues 1 to 31 (MAARAPELARSLLAALLAPALVALLVSPASG) form the signal peptide. Residues 30 to 53 (SGRGGRDHGDWDVDRRLPPLPPRE) are disordered. The span at 33–53 (GGRDHGDWDVDRRLPPLPPRE) shows a compositional bias: basic and acidic residues. Asparagine 160 and asparagine 216 each carry an N-linked (GlcNAc...) asparagine glycan.

Belongs to the CREG family. As to quaternary structure, homodimer. Interacts with IGF2R; the interaction is dependent on glycosylation. N-glycosylated. As to expression, widely expressed.

Its subcellular location is the secreted. Its function is as follows. May contribute to the transcriptional control of cell growth and differentiation. Antagonizes transcriptional activation and cellular transformation by the adenovirus E1A protein. The transcriptional control activity of cell growth requires interaction with IGF2R. This is Protein CREG1 (Creg1) from Mus musculus (Mouse).